The sequence spans 142 residues: Serine protease inhibitor (142 aa).

Position 1 is an N-acetylserine (S1).

In terms of biological role, serine protease inhibitor. Active against beta-trypsin and alpha-chymotrypsin with dissociation constants of 0.35 nM and 40 nM respectively. Inhibits factor XIa, but not other enzymes involved in coagulation and fibrinolysis. Does not inhibit subtilisin, lysyl endopeptidase, arginyl endopeptidase or papain. In Lentinula edodes (Shiitake mushroom), this protein is Serine protease inhibitor.